The chain runs to 446 residues: MKLFGTDGVRGRAGEKLNAMTAMRLAMAAGIYFRKNSITNKILVGKDTRKSGYMIETAIVAGLTAVGYNVIQIGPMPTPAIAFLTEDMRCDAGIMISASHNPFDDNGIKFFDSFGNKLSVEAEQAIENIFFHNEIIENNQKIGLEIGQSKRIDDVIGRYIVHIKNSFPKSLTLKGLRVVLDVANGAVYKVAPTVFSELGAETIVLNDEPNGGNINDGCGALHPENLAKEVKRLRADIGFAFDGDADRLVVVDENAKVVDGDALLGVLATYLDENKMLDKKEIVATVMSNAALDDYLAKHKIKLLRSNVGDKFVLEMMKENGINFGGEQSGHIIFSDFSKTGDGLVSALQVSACLLAKNKKASEIFGSIKAYPQKLSNLKIIEKRPLDELKGLKELEDELKKLGIRTLFRYSGTENVIRLLLEGKDEALVTKKIAEVEKFFIKALNE.

Residue Ser-99 is the Phosphoserine intermediate of the active site. Residues Ser-99, Asp-242, Asp-244, and Asp-246 each coordinate Mg(2+). Ser-99 carries the post-translational modification Phosphoserine.

This sequence belongs to the phosphohexose mutase family. Requires Mg(2+) as cofactor. In terms of processing, activated by phosphorylation.

It carries out the reaction alpha-D-glucosamine 1-phosphate = D-glucosamine 6-phosphate. In terms of biological role, catalyzes the conversion of glucosamine-6-phosphate to glucosamine-1-phosphate. The polypeptide is Phosphoglucosamine mutase (Campylobacter fetus subsp. fetus (strain 82-40)).